The chain runs to 876 residues: Leucine--tRNA ligase (876 aa).

A 'HIGH' region motif is present at residues 43–53; it reads PYPSGRIHMGH. The short motif at 632–636 is the 'KMSKS' region element; it reads KMSKS. Lys635 is a binding site for ATP.

The protein belongs to the class-I aminoacyl-tRNA synthetase family.

It is found in the cytoplasm. The enzyme catalyses tRNA(Leu) + L-leucine + ATP = L-leucyl-tRNA(Leu) + AMP + diphosphate. This is Leucine--tRNA ligase from Rhizobium etli (strain CIAT 652).